Consider the following 443-residue polypeptide: Thymidine phosphorylase (443 aa).

Belongs to the thymidine/pyrimidine-nucleoside phosphorylase family. In terms of assembly, homodimer.

It catalyses the reaction thymidine + phosphate = 2-deoxy-alpha-D-ribose 1-phosphate + thymine. It functions in the pathway pyrimidine metabolism; dTMP biosynthesis via salvage pathway; dTMP from thymine: step 1/2. Its function is as follows. The enzymes which catalyze the reversible phosphorolysis of pyrimidine nucleosides are involved in the degradation of these compounds and in their utilization as carbon and energy sources, or in the rescue of pyrimidine bases for nucleotide synthesis. This Shewanella woodyi (strain ATCC 51908 / MS32) protein is Thymidine phosphorylase.